We begin with the raw amino-acid sequence, 216 residues long: MRLTALLSMAAKVALPHGYRYGTNRPWTIAARRLNPPGKRRRKVFVEPIANEDWPVVRGDTVEVLSGKEKGKQGKVAQVIRARNWVILEGLNTHYRYVGRSGDYRGTYLASEAPLLLKDIALIDPTDRKPTEIQWRYTEEGERVRVSVRTGRIIPKPVFQRKDGIVPQQWKDGPKDTSPEDTLQKTYTPSLKTLEEEVMEKMNIQENRRPRKSYWY.

The transit peptide at 1 to 9 directs the protein to the mitochondrion; the sequence is MRLTALLSM. Residues 56-89 enclose the KOW domain; sequence VVRGDTVEVLSGKEKGKQGKVAQVIRARNWVILE. The interval 167–186 is disordered; sequence PQQWKDGPKDTSPEDTLQKT.

This sequence belongs to the universal ribosomal protein uL24 family. As to quaternary structure, component of the mitochondrial ribosome large subunit (39S) which comprises a 16S rRNA and about 50 distinct proteins.

The protein localises to the mitochondrion. The sequence is that of Large ribosomal subunit protein uL24m (mrpl24) from Danio rerio (Zebrafish).